A 434-amino-acid polypeptide reads, in one-letter code: Enolase (434 aa).

Position 163 (Gln163) interacts with (2R)-2-phosphoglycerate. Glu205 acts as the Proton donor in catalysis. Asp242, Glu291, and Asp318 together coordinate Mg(2+). Residues Lys343, Arg372, Ser373, and Lys394 each coordinate (2R)-2-phosphoglycerate. Lys343 functions as the Proton acceptor in the catalytic mechanism.

It belongs to the enolase family. It depends on Mg(2+) as a cofactor.

Its subcellular location is the cytoplasm. The protein localises to the secreted. The protein resides in the cell surface. It catalyses the reaction (2R)-2-phosphoglycerate = phosphoenolpyruvate + H2O. It participates in carbohydrate degradation; glycolysis; pyruvate from D-glyceraldehyde 3-phosphate: step 4/5. Catalyzes the reversible conversion of 2-phosphoglycerate (2-PG) into phosphoenolpyruvate (PEP). It is essential for the degradation of carbohydrates via glycolysis. The polypeptide is Enolase (Streptococcus thermophilus (strain CNRZ 1066)).